Here is a 142-residue protein sequence, read N- to C-terminus: Large ribosomal subunit protein uL13 (142 aa).

This sequence belongs to the universal ribosomal protein uL13 family. Part of the 50S ribosomal subunit.

This protein is one of the early assembly proteins of the 50S ribosomal subunit, although it is not seen to bind rRNA by itself. It is important during the early stages of 50S assembly. The polypeptide is Large ribosomal subunit protein uL13 (Hydrogenovibrio crunogenus (strain DSM 25203 / XCL-2) (Thiomicrospira crunogena)).